The primary structure comprises 872 residues: Protein SEY1 (872 aa).

Topologically, residues methionine 1–glutamine 749 are cytoplasmic. The GB1/RHD3-type G domain occupies glycine 49–tyrosine 294. A GTP-binding site is contributed by glycine 59–serine 66. The stretch at serine 482–arginine 504 forms a coiled coil. A disordered region spans residues leucine 676–aspartate 704. The segment covering alanine 690–aspartate 704 has biased composition (acidic residues). Residues valine 750–leucine 770 form a helical membrane-spanning segment. Residues arginine 771 to proline 773 are Lumenal-facing. A helical transmembrane segment spans residues alanine 774–leucine 794. Residues tryptophan 795–phenylalanine 872 lie on the Cytoplasmic side of the membrane. Positions asparagine 849–phenylalanine 872 are disordered.

The protein belongs to the TRAFAC class dynamin-like GTPase superfamily. GB1/RHD3 GTPase family. RHD3 subfamily.

The protein localises to the endoplasmic reticulum membrane. Functionally, cooperates with the reticulon proteins and tubule-shaping DP1 family proteins to generate and maintain the structure of the tubular endoplasmic reticulum network. Has GTPase activity, which is required for its function in ER organization. The polypeptide is Protein SEY1 (Paracoccidioides brasiliensis (strain Pb03)).